A 337-amino-acid chain; its full sequence is Regulator of RpoS (337 aa).

In terms of domain architecture, Response regulatory spans 9 to 123 (QILIVEDEQV…NRLREMVFAC (115 aa)). At Asp58 the chain carries 4-aspartylphosphate.

It belongs to the RssB family. As to quaternary structure, binds to RpoS. Phosphorylated. Phosphorylation stimulates the interaction with RpoS and, therefore, the proteolysis of RpoS.

In terms of biological role, regulates the turnover of the sigma S factor (RpoS) by promoting its proteolysis in exponentially growing cells. Acts by binding and delivering RpoS to the ClpXP protease. RssB is not co-degraded with RpoS, but is released from the complex and can initiate a new cycle of RpoS recognition and degradation. The polypeptide is Regulator of RpoS (Shigella flexneri).